Here is a 429-residue protein sequence, read N- to C-terminus: Enolase (429 aa).

Residue glutamine 162 coordinates (2R)-2-phosphoglycerate. The active-site Proton donor is the glutamate 204. Mg(2+) contacts are provided by aspartate 241, glutamate 283, and aspartate 310. 4 residues coordinate (2R)-2-phosphoglycerate: lysine 335, arginine 364, serine 365, and lysine 386. The active-site Proton acceptor is the lysine 335.

It belongs to the enolase family. Requires Mg(2+) as cofactor.

Its subcellular location is the cytoplasm. The protein localises to the secreted. It is found in the cell surface. It carries out the reaction (2R)-2-phosphoglycerate = phosphoenolpyruvate + H2O. It participates in carbohydrate degradation; glycolysis; pyruvate from D-glyceraldehyde 3-phosphate: step 4/5. Catalyzes the reversible conversion of 2-phosphoglycerate (2-PG) into phosphoenolpyruvate (PEP). It is essential for the degradation of carbohydrates via glycolysis. The chain is Enolase from Mycobacterium avium (strain 104).